Reading from the N-terminus, the 603-residue chain is NADH-ubiquinone oxidoreductase chain 5 (603 aa).

Helical transmembrane passes span 4-24 (YTTM…ATLI), 36-56 (VKMT…MFMC), 87-107 (MMFI…SLWY), 114-134 (INQF…LVTA), 137-157 (LFQL…LIGW), 171-191 (AILY…WFLL), 200-220 (QMIL…LLAA), 241-261 (TPVS…FLLI), 272-292 (LIQT…AICA), 301-320 (IVAF…IGIN), 325-347 (AFLH…GSII), 366-386 (LPLT…MPFL), 407-429 (WALS…MILL), 457-477 (LTIG…PTSP), 482-502 (IPLY…LTAF), and 583-603 (MIKL…LLIM).

It belongs to the complex I subunit 5 family. As to quaternary structure, core subunit of respiratory chain NADH dehydrogenase (Complex I) which is composed of 45 different subunits.

It localises to the mitochondrion inner membrane. The catalysed reaction is a ubiquinone + NADH + 5 H(+)(in) = a ubiquinol + NAD(+) + 4 H(+)(out). Its function is as follows. Core subunit of the mitochondrial membrane respiratory chain NADH dehydrogenase (Complex I) which catalyzes electron transfer from NADH through the respiratory chain, using ubiquinone as an electron acceptor. Essential for the catalytic activity and assembly of complex I. The chain is NADH-ubiquinone oxidoreductase chain 5 (MT-ND5) from Hylobates lar (Lar gibbon).